We begin with the raw amino-acid sequence, 366 residues long: tRNA(Met) cytidine acetate ligase (366 aa).

ATP-binding positions include 7–20 (IAEF…HQYL), Gly-96, Asn-152, and Arg-175.

This sequence belongs to the TmcAL family.

Its subcellular location is the cytoplasm. The enzyme catalyses cytidine(34) in elongator tRNA(Met) + acetate + ATP = N(4)-acetylcytidine(34) in elongator tRNA(Met) + AMP + diphosphate. Functionally, catalyzes the formation of N(4)-acetylcytidine (ac(4)C) at the wobble position of elongator tRNA(Met), using acetate and ATP as substrates. First activates an acetate ion to form acetyladenylate (Ac-AMP) and then transfers the acetyl group to tRNA to form ac(4)C34. This Streptococcus equi subsp. zooepidemicus (strain MGCS10565) protein is tRNA(Met) cytidine acetate ligase.